A 148-amino-acid chain; its full sequence is 15 kDa excretory/secretory protein (148 aa).

A signal peptide spans 1–19 (MFFAFAVLLIALATREAYG).

It to T.colubriformis 30 kDa antigenic glycoprotein.

The protein localises to the secreted. This is 15 kDa excretory/secretory protein from Haemonchus contortus (Barber pole worm).